A 203-amino-acid chain; its full sequence is MIGKLSGKIDSQGDDYIIIDVNGVGYLVYASGKTLGKLAEGEFYKLFIETHVREEHIHLYGFLTLEEKNFFNLLQSVNGIGTRMALSILSSLTPSDIQIAINNEDKNIFKAISGVGAKLAERIVLELKGKVAKISSGSVIIKDSLNIKNITPVASNEVIKALVNLGFSRFEAQNAVQGIIIQNPEISIDELIKTALKNRNAGL.

Residues 1–63 are domain I; that stretch reads MIGKLSGKID…EEHIHLYGFL (63 aa). Residues 64–142 are domain II; it reads TLEEKNFFNL…KISSGSVIIK (79 aa). A flexible linker region spans residues 143 to 149; the sequence is DSLNIKN. Residues 150 to 203 are domain III; that stretch reads ITPVASNEVIKALVNLGFSRFEAQNAVQGIIIQNPEISIDELIKTALKNRNAGL.

This sequence belongs to the RuvA family. In terms of assembly, homotetramer. Forms an RuvA(8)-RuvB(12)-Holliday junction (HJ) complex. HJ DNA is sandwiched between 2 RuvA tetramers; dsDNA enters through RuvA and exits via RuvB. An RuvB hexamer assembles on each DNA strand where it exits the tetramer. Each RuvB hexamer is contacted by two RuvA subunits (via domain III) on 2 adjacent RuvB subunits; this complex drives branch migration. In the full resolvosome a probable DNA-RuvA(4)-RuvB(12)-RuvC(2) complex forms which resolves the HJ.

The protein resides in the cytoplasm. Functionally, the RuvA-RuvB-RuvC complex processes Holliday junction (HJ) DNA during genetic recombination and DNA repair, while the RuvA-RuvB complex plays an important role in the rescue of blocked DNA replication forks via replication fork reversal (RFR). RuvA specifically binds to HJ cruciform DNA, conferring on it an open structure. The RuvB hexamer acts as an ATP-dependent pump, pulling dsDNA into and through the RuvAB complex. HJ branch migration allows RuvC to scan DNA until it finds its consensus sequence, where it cleaves and resolves the cruciform DNA. This Rickettsia felis (strain ATCC VR-1525 / URRWXCal2) (Rickettsia azadi) protein is Holliday junction branch migration complex subunit RuvA.